The sequence spans 140 residues: Putative pre-16S rRNA nuclease (140 aa).

It belongs to the YqgF nuclease family.

The protein resides in the cytoplasm. Functionally, could be a nuclease involved in processing of the 5'-end of pre-16S rRNA. The chain is Putative pre-16S rRNA nuclease from Actinobacillus succinogenes (strain ATCC 55618 / DSM 22257 / CCUG 43843 / 130Z).